We begin with the raw amino-acid sequence, 156 residues long: ATP synthase subunit b 2 (156 aa).

A helical membrane pass occupies residues 7–29 (LLGQAISFAIFVWFCMKYVWPPV).

Belongs to the ATPase B chain family. F-type ATPases have 2 components, F(1) - the catalytic core - and F(0) - the membrane proton channel. F(1) has five subunits: alpha(3), beta(3), gamma(1), delta(1), epsilon(1). F(0) has three main subunits: a(1), b(2) and c(10-14). The alpha and beta chains form an alternating ring which encloses part of the gamma chain. F(1) is attached to F(0) by a central stalk formed by the gamma and epsilon chains, while a peripheral stalk is formed by the delta and b chains.

The protein localises to the cell inner membrane. Functionally, f(1)F(0) ATP synthase produces ATP from ADP in the presence of a proton or sodium gradient. F-type ATPases consist of two structural domains, F(1) containing the extramembraneous catalytic core and F(0) containing the membrane proton channel, linked together by a central stalk and a peripheral stalk. During catalysis, ATP synthesis in the catalytic domain of F(1) is coupled via a rotary mechanism of the central stalk subunits to proton translocation. Its function is as follows. Component of the F(0) channel, it forms part of the peripheral stalk, linking F(1) to F(0). This chain is ATP synthase subunit b 2, found in Marinomonas sp. (strain MWYL1).